Consider the following 395-residue polypeptide: Elongation factor Tu (395 aa).

In terms of domain architecture, tr-type G spans 10–205; it reads KPHVNVGTIG…VDNDIPIPPR (196 aa). A G1 region spans residues 19–26; it reads GHVDHGKT. 19-26 is a GTP binding site; sequence GHVDHGKT. Thr26 is a Mg(2+) binding site. Positions 60-64 are G2; it reads GITIN. The interval 81 to 84 is G3; the sequence is DCPG. GTP contacts are provided by residues 81-85 and 136-139; these read DCPGH and NKVD. Residues 136–139 are G4; that stretch reads NKVD. Positions 174-176 are G5; the sequence is SAL.

Belongs to the TRAFAC class translation factor GTPase superfamily. Classic translation factor GTPase family. EF-Tu/EF-1A subfamily. Monomer.

It localises to the cytoplasm. It carries out the reaction GTP + H2O = GDP + phosphate + H(+). GTP hydrolase that promotes the GTP-dependent binding of aminoacyl-tRNA to the A-site of ribosomes during protein biosynthesis. This chain is Elongation factor Tu, found in Cytophaga hutchinsonii (strain ATCC 33406 / DSM 1761 / CIP 103989 / NBRC 15051 / NCIMB 9469 / D465).